The primary structure comprises 479 residues: Flavonol 3-O-glucosyltransferase UGT71C4 (479 aa).

Histidine 17 functions as the Proton acceptor in the catalytic mechanism. Histidine 17 serves as a coordination point for an anthocyanidin. Aspartate 127 acts as the Charge relay in catalysis. The UDP-alpha-D-glucose site is built by threonine 150, alanine 350, glutamine 352, histidine 367, tryptophan 370, asparagine 371, serine 372, and glutamate 375. Alanine 390 lines the an anthocyanidin pocket. Residues glutamate 391 and glutamine 392 each contribute to the UDP-alpha-D-glucose site.

Belongs to the UDP-glycosyltransferase family.

It catalyses the reaction a flavonol + UDP-alpha-D-glucose = a flavonol 3-O-beta-D-glucoside + UDP + H(+). The catalysed reaction is a 7-O-hydroxy-flavonol + UDP-alpha-D-glucose = a flavonol 7-O-beta-D-glucoside + UDP + H(+). Functionally, possesses quercetin 3-O-glucosyltransferase and 7-O-glucosyltransferase activities in vitro. Also active in vitro on benzoates and benzoate derivatives. This chain is Flavonol 3-O-glucosyltransferase UGT71C4, found in Arabidopsis thaliana (Mouse-ear cress).